The following is a 348-amino-acid chain: Ion-translocating oxidoreductase complex subunit D (348 aa).

Helical transmembrane passes span 23-43 (WVLA…GYGT), 44-64 (LIQL…IMLL), 72-91 (ALRD…AIPP), and 126-146 (IAYV…MAPI). At Thr-187 the chain carries FMN phosphoryl threonine. The next 5 helical transmembrane spans lie at 214–234 (FAGI…LILL), 243–263 (IPMA…LFAP), 266–286 (TASP…FFIA), 300–320 (LIYG…GGFP), and 321–341 (DGVA…DYYT).

The protein belongs to the NqrB/RnfD family. The complex is composed of six subunits: RnfA, RnfB, RnfC, RnfD, RnfE and RnfG. It depends on FMN as a cofactor.

Its subcellular location is the cell inner membrane. Functionally, part of a membrane-bound complex that couples electron transfer with translocation of ions across the membrane. This Vibrio cholerae serotype O1 (strain ATCC 39315 / El Tor Inaba N16961) protein is Ion-translocating oxidoreductase complex subunit D.